The chain runs to 1400 residues: Alpha-(1-&gt;3)-arabinofuranosyltransferase (1400 aa).

The N-terminal stretch at 1-30 is a signal peptide; that stretch reads MAPLSRKWLPVVGAVALALTFAQSPGQVSP. Helical transmembrane passes span 67 to 87, 91 to 111, 139 to 159, 179 to 199, 215 to 235, 282 to 302, 314 to 334, and 401 to 421; these read YLFPHGTFFVIGHLLGVPGWV, LWWAVLLTVGFWGLLRVAEAL, ISSETLPMMLAPWVLLPTILA, VALMGAVNAIATLAGCLPAVI, AWWLLAMALATLWWVMALTQL, LVTGSAAILGTCLVAAAGLAG, LVTMLLVGVVLLAVGHRGGLA, and VAVAVVALTALMVSTSLAWTG. The 184-residue stretch at 700-883 folds into the F5/8 type C domain; it reads AEPVVGGWTG…WDLGSELLGR (184 aa). Transmembrane regions (helical) follow at residues 1256–1276, 1297–1317, 1338–1358, and 1369–1389; these read LYRASLAIGLALLPLLALLAF, WAAAGVLAAGAVIASIAGVMV, VTVGLAAGGLILAGAALSRHP, and WASVQLLALISVSVVAASVVA.

The protein localises to the membrane. It catalyses the reaction Adds an alpha-D-arabinofuranosyl group from trans,octacis-decaprenylphospho-beta-D-arabinofuranose at the 3-O-position of an alpha-(1-&gt;5)-arabinofuranan chain attached to a beta-(1-&gt;5)-galactofuranan chain.. It participates in cell wall biogenesis; cell wall polysaccharide biosynthesis. Functionally, involved in the biosynthesis of the arabinogalactan (AG) region of the mycolylarabinogalactan-peptidoglycan (mAGP) complex, an essential component of the mycobacterial cell wall. Catalyzes the addition of an arabinofuranosyl (Araf) residue from the sugar donor decaprenyl-phospho-arabinose (DPA) on the C-3 of an alpha-(1-&gt;5)-linked Araf from the arabinan backbone of AG. The chain is Alpha-(1-&gt;3)-arabinofuranosyltransferase (aftD) from Mycobacterium tuberculosis (strain ATCC 25618 / H37Rv).